The primary structure comprises 728 residues: E3 ubiquitin-protein ligase LNX (728 aa).

The RING-type zinc finger occupies Cys-45 to Arg-83. Residues Asn-185–Tyr-188 carry the NPXY motif motif. Residues Asn-185 to Met-220 are disordered. Positions Pro-186–Val-244 are interaction with MAGEB18. PDZ domains lie at Ser-278–Glu-362 and His-385–Gln-467. At Ser-445 the chain carries Phosphoserine. Residues Trp-481 to Pro-500 are disordered. 2 PDZ domains span residues Val-508 to Val-593 and Asp-638 to Trp-723.

In terms of assembly, interacts with CXADR. Interacts with MAGEB18 and MAGEF1. Interacts with the phosphotyrosine interaction domain of all isoforms of NUMB. IGSF5/JAM4 interacts with isoform 2 through the second PDZ domain, other isoforms may also interact with IGSF5/JAM4. In terms of tissue distribution, isoform 1 and isoform 2 are expressed in the heart. Isoform 1 is also expressed in kidney, lung and skeletal muscle while isoform 2 is also expressed in brain.

It is found in the cytoplasm. It carries out the reaction S-ubiquitinyl-[E2 ubiquitin-conjugating enzyme]-L-cysteine + [acceptor protein]-L-lysine = [E2 ubiquitin-conjugating enzyme]-L-cysteine + N(6)-ubiquitinyl-[acceptor protein]-L-lysine.. It functions in the pathway protein modification; protein ubiquitination. In terms of biological role, E3 ubiquitin-protein ligase that mediates ubiquitination and subsequent proteasomal degradation of NUMB. E3 ubiquitin ligases accept ubiquitin from an E2 ubiquitin-conjugating enzyme in the form of a thioester and then directly transfers the ubiquitin to targeted substrates. Mediates ubiquitination of isoform p66 and isoform p72 of NUMB, but not that of isoform p71 or isoform p65. Functionally, isoform 2 provides an endocytic scaffold for IGSF5/JAM4. This is E3 ubiquitin-protein ligase LNX (Lnx1) from Mus musculus (Mouse).